A 394-amino-acid chain; its full sequence is Guanine nucleotide-binding protein G(s) subunit alpha isoforms short (394 aa).

The interval 1–23 (MGCLGNSKTEDQRNEEKAQREAN) is disordered. Gly-2 is lipidated: N-palmitoyl glycine. The S-palmitoyl cysteine moiety is linked to residue Cys-3. Over residues 8–23 (KTEDQRNEEKAQREAN) the composition is skewed to basic and acidic residues. A G-alpha domain is found at 39–394 (ATHRLLLLGA…RMHLRQYELL (356 aa)). A G1 motif region spans residues 42–55 (RLLLLGAGESGKST). 47 to 55 (GAGESGKST) serves as a coordination point for GTP. Ser-54 contributes to the Mg(2+) binding site. The interval 68–90 (FNGEGGEEDPQAARSNSDGEKAT) is disordered. The interval 196–204 (DLLRCRVLT) is G2 motif. GTP is bound by residues 197–204 (LLRCRVLT), 223–227 (DVGGQ), and 292–295 (NKQD). Thr-204 provides a ligand contact to Mg(2+). The segment at 219–228 (FHMFDVGGQR) is G3 motif. The interval 288-295 (ILFLNKQD) is G4 motif. Lys-300 is covalently cross-linked (Glycyl lysine isopeptide (Lys-Gly) (interchain with G-Cter in ubiquitin)). Ser-352 is modified (phosphoserine). A G5 motif region spans residues 364–369 (TCAVDT). GTP is bound at residue Ala-366.

This sequence belongs to the G-alpha family. G(s) subfamily. As to quaternary structure, heterotrimeric G proteins are composed of 3 units; alpha, beta and gamma. The alpha chain contains the guanine nucleotide binding site. Component of the TAS2R14-GNAS2 complex, consisting of TAS2R14, GNAS2, GNB1 and GNG2; within the complex interacts with TAS2R14; this complex plays a role in the perception of bitterness. Interacts with CRY1; the interaction may block GPCR-mediated regulation of cAMP concentrations. Interacts with ADCY6 and stimulates its adenylyl cyclase activity. Interacts with ADCY2 and ADCY5. Interacts (GDP-bound form) with RIC8B; promoting GNAS folding and association with the plasma membrane. Stimulates the ADCY5 adenylyl cyclase activity. Interaction with SASH1. Interacts with GASL2L2.

The protein localises to the cell membrane. The catalysed reaction is GTP + H2O = GDP + phosphate + H(+). Guanine nucleotide-binding proteins (G proteins) function as transducers in numerous signaling pathways controlled by G protein-coupled receptors (GPCRs). The alpha chain contains the guanine nucleotide binding site and alternates between an active, GTP-bound state and an inactive, GDP-bound state. Signaling by an activated GPCR promotes GDP release and GTP binding. The alpha subunit has a low GTPase activity that converts bound GTP to GDP, thereby terminating the signal. Both GDP release and GTP hydrolysis are modulated by numerous regulatory proteins. Signaling involves the activation of adenylyl cyclases, resulting in increased levels of the signaling molecule cAMP. Functions downstream of beta-adrenergic receptors. Stimulates the Ras signaling pathway via RAPGEF2. This chain is Guanine nucleotide-binding protein G(s) subunit alpha isoforms short (Gnas), found in Mus musculus (Mouse).